A 224-amino-acid polypeptide reads, in one-letter code: Cytochrome c biogenesis ATP-binding export protein CcmA (224 aa).

The ABC transporter domain occupies 1-220 (MQNAEAAPAL…EYAHAEVVGA (220 aa)). 40–47 (GANGSGKT) is an ATP binding site.

Belongs to the ABC transporter superfamily. CcmA exporter (TC 3.A.1.107) family. In terms of assembly, the complex is composed of two ATP-binding proteins (CcmA) and two transmembrane proteins (CcmB).

The protein resides in the cell inner membrane. It catalyses the reaction heme b(in) + ATP + H2O = heme b(out) + ADP + phosphate + H(+). In terms of biological role, part of the ABC transporter complex CcmAB involved in the biogenesis of c-type cytochromes; once thought to export heme, this seems not to be the case, but its exact role is uncertain. Responsible for energy coupling to the transport system. In Bordetella bronchiseptica (strain ATCC BAA-588 / NCTC 13252 / RB50) (Alcaligenes bronchisepticus), this protein is Cytochrome c biogenesis ATP-binding export protein CcmA.